The primary structure comprises 239 residues: Ubiquinone biosynthesis O-methyltransferase (239 aa).

R44, G63, D84, and M128 together coordinate S-adenosyl-L-methionine.

Belongs to the methyltransferase superfamily. UbiG/COQ3 family.

The enzyme catalyses a 3-demethylubiquinol + S-adenosyl-L-methionine = a ubiquinol + S-adenosyl-L-homocysteine + H(+). It carries out the reaction a 3-(all-trans-polyprenyl)benzene-1,2-diol + S-adenosyl-L-methionine = a 2-methoxy-6-(all-trans-polyprenyl)phenol + S-adenosyl-L-homocysteine + H(+). It participates in cofactor biosynthesis; ubiquinone biosynthesis. Its function is as follows. O-methyltransferase that catalyzes the 2 O-methylation steps in the ubiquinone biosynthetic pathway. This Xanthomonas oryzae pv. oryzae (strain MAFF 311018) protein is Ubiquinone biosynthesis O-methyltransferase.